Reading from the N-terminus, the 356-residue chain is Phosphate acyltransferase (356 aa).

Belongs to the PlsX family. In terms of assembly, homodimer. Probably interacts with PlsY.

The protein localises to the cytoplasm. The catalysed reaction is a fatty acyl-[ACP] + phosphate = an acyl phosphate + holo-[ACP]. It participates in lipid metabolism; phospholipid metabolism. In terms of biological role, catalyzes the reversible formation of acyl-phosphate (acyl-PO(4)) from acyl-[acyl-carrier-protein] (acyl-ACP). This enzyme utilizes acyl-ACP as fatty acyl donor, but not acyl-CoA. This Shigella sonnei (strain Ss046) protein is Phosphate acyltransferase.